The primary structure comprises 222 residues: MLSRAVCGTSRQLAPVLGYLGSRQKHSLPDLPYDYGALEPHINAQIMQLHHSKHHAAYVNNLNVTEEKYQEALAKGDVTAQIALQPALKFNGGGHINHSIFWTNLSPNGGGEPKGELLEAIKRDFGSFDKFKEKLTAASVGVQGSGWGWLGFNKERGHLQIAACPNQDPLQGTTGLIPLLGIDVWEHAYYLQYKNVRPDYLKAIWNVINWENVTERYMACKK.

A mitochondrion-targeting transit peptide spans 1-24; sequence MLSRAVCGTSRQLAPVLGYLGSRQ. H50 is a Mn(2+) binding site. The residue at position 58 (Y58) is a 3'-nitrotyrosine. N6-acetyllysine; alternate is present on residues K68 and K75. 2 positions are modified to N6-succinyllysine; alternate: K68 and K75. Position 98 (H98) interacts with Mn(2+). At K114 the chain carries N6-acetyllysine. K122 and K130 each carry N6-acetyllysine; alternate. K122 and K130 each carry N6-succinyllysine; alternate. Mn(2+) contacts are provided by D183 and H187. An N6-acetyllysine modification is found at K202.

It belongs to the iron/manganese superoxide dismutase family. As to quaternary structure, homotetramer. Mn(2+) is required as a cofactor. Nitrated under oxidative stress. Nitration coupled with oxidation inhibits the catalytic activity. Post-translationally, acetylation at Lys-122 decreases enzymatic activity. Deacetylated by SIRT3 upon exposure to ionizing radiations or after long fasting. In terms of processing, polyubiquitinated; leading to proteasomal degradation. Deubiquitinated by USP36 which increases protein stability.

Its subcellular location is the mitochondrion matrix. The catalysed reaction is 2 superoxide + 2 H(+) = H2O2 + O2. Its function is as follows. Destroys superoxide anion radicals which are normally produced within the cells and which are toxic to biological systems. This is Superoxide dismutase [Mn], mitochondrial (SOD2) from Homo sapiens (Human).